Here is a 64-residue protein sequence, read N- to C-terminus: Disintegrin VB7A (64 aa).

Residues 1–64 (NSGNPCCDPV…SDCPRNPYKD (64 aa)) enclose the Disintegrin domain. 4 disulfides stabilise this stretch: C6/C29, C20/C26, C25/C50, and C38/C57. Positions 42-44 (RGD) match the Cell attachment site motif.

The protein belongs to the disintegrin family. Dimeric disintegrin subfamily. As to quaternary structure, heterodimer with VB7B; disulfide-linked. In terms of tissue distribution, expressed by the venom gland.

The protein localises to the secreted. In terms of biological role, poor inhibitor of platelet aggregation. The disintegrin inhibits the adhesion of cells expressing the RGD-dependent integrin alpha-5/beta-1 (ITGA5/ITGB1) to immobilized fibronectin. Inhibition on alpha-2b/beta-3 (ITGA2B/ITGB3) is low. The polypeptide is Disintegrin VB7A (Vipera berus berus (Common viper)).